The chain runs to 308 residues: Aldo-keto reductase AKR2E4 (308 aa).

Residues 22 to 29 (GTGRGTAK) and D53 each bind NADP(+). Y58 (proton donor) is an active-site residue. Residues 158-159 (SN), R215, and 259-269 (KSTNKQRIAQN) each bind NADP(+).

Belongs to the short-chain dehydrogenases/reductases (SDR) family. As to expression, detected in hemolymph (at protein level). Detected in larval ovary.

Its activity is regulated as follows. Subject to substrate inhibition by high levels of 3-dehydroecdysone. Functionally, NADP-dependent oxidoreductase with high 3-dehydroecdysone reductase activity. May play a role in the regulation of molting. Has lower activity with phenylglyoxal and isatin (in vitro). Has no activity with NADH as cosubstrate. Has no activity with nitrobenzaldehyde and 3-hydroxybenzaldehyde. This is Aldo-keto reductase AKR2E4 (akr2e) from Bombyx mori (Silk moth).